A 315-amino-acid chain; its full sequence is Olfactory receptor 10A4 (315 aa).

At 1 to 26 (MMWENWTIVSEFVLVSFSALSTELQA) the chain is on the extracellular side. Asn5 carries N-linked (GlcNAc...) asparagine glycosylation. The chain crosses the membrane as a helical span at residues 27–47 (LLFLLFLTIYLVTLMGNVLII). Over 48–55 (LVTIADSA) the chain is Cytoplasmic. A helical transmembrane segment spans residues 56–76 (LQSPMYFFLRNLSFLEIGFNL). The Extracellular segment spans residues 77–100 (VIVPKMLGTLIIQDTTISFLGCAT). Cys98 and Cys190 are joined by a disulfide. Residues 101–121 (QMYFFFFFGAAECCLLATMAY) form a helical membrane-spanning segment. Over 122–140 (DRYVAICDPLHYPVIMGHI) the chain is Cytoplasmic. Residues 141-161 (SCAQLAAASWFSGFSVATVQT) form a helical membrane-spanning segment. The Extracellular portion of the chain corresponds to 162-198 (TWIFSFPFCGPNRVNHFFCDSPPVIALVCADTSVFEL). Residues 199-218 (EALTATVLFILFPFLLILGS) traverse the membrane as a helical segment. The Cytoplasmic segment spans residues 219-238 (YVRILSTIFRMPSAEGKHQA). A helical transmembrane segment spans residues 239–259 (FSTCSAHLLVVSLFYSTAILT). The Extracellular portion of the chain corresponds to 260 to 272 (YFRPQSSASSESK). A helical membrane pass occupies residues 273 to 293 (KLLSLSSTVVTPMLNPIIYSS). Over 294-315 (RNKEVKAALKRLIHRTLGSQKL) the chain is Cytoplasmic.

The protein belongs to the G-protein coupled receptor 1 family. As to expression, expressed in the tongue.

Its subcellular location is the cell membrane. Its function is as follows. Odorant receptor (Potential). May be involved in taste perception. The sequence is that of Olfactory receptor 10A4 (OR10A4) from Homo sapiens (Human).